A 318-amino-acid chain; its full sequence is Homoserine kinase (318 aa).

97 to 107 lines the ATP pocket; the sequence is PIGSGLGSSAC.

It belongs to the GHMP kinase family. Homoserine kinase subfamily.

Its subcellular location is the cytoplasm. The enzyme catalyses L-homoserine + ATP = O-phospho-L-homoserine + ADP + H(+). The protein operates within amino-acid biosynthesis; L-threonine biosynthesis; L-threonine from L-aspartate: step 4/5. Functionally, catalyzes the ATP-dependent phosphorylation of L-homoserine to L-homoserine phosphate. The polypeptide is Homoserine kinase (Photobacterium profundum (strain SS9)).